We begin with the raw amino-acid sequence, 151 residues long: SsrA-binding protein (151 aa).

Positions 132–151 (KRQTIKKRDQDREIHRKYGI) are disordered.

This sequence belongs to the SmpB family.

It is found in the cytoplasm. Functionally, required for rescue of stalled ribosomes mediated by trans-translation. Binds to transfer-messenger RNA (tmRNA), required for stable association of tmRNA with ribosomes. tmRNA and SmpB together mimic tRNA shape, replacing the anticodon stem-loop with SmpB. tmRNA is encoded by the ssrA gene; the 2 termini fold to resemble tRNA(Ala) and it encodes a 'tag peptide', a short internal open reading frame. During trans-translation Ala-aminoacylated tmRNA acts like a tRNA, entering the A-site of stalled ribosomes, displacing the stalled mRNA. The ribosome then switches to translate the ORF on the tmRNA; the nascent peptide is terminated with the 'tag peptide' encoded by the tmRNA and targeted for degradation. The ribosome is freed to recommence translation, which seems to be the essential function of trans-translation. This chain is SsrA-binding protein, found in Lactobacillus gasseri (strain ATCC 33323 / DSM 20243 / BCRC 14619 / CIP 102991 / JCM 1131 / KCTC 3163 / NCIMB 11718 / NCTC 13722 / AM63).